Reading from the N-terminus, the 369-residue chain is Glycine oxidase (369 aa).

FAD-binding positions include 14–15, 34–35, 42–43, 47–49, and V174; these read II, ES, TT, and AGM. R302 and R329 together coordinate substrate. 327 to 333 contributes to the FAD binding site; that stretch reads HFRNGIL.

It belongs to the DAO family. ThiO subfamily. Homotetramer. The cofactor is FAD.

The protein localises to the cytoplasm. It catalyses the reaction glycine + O2 + H2O = glyoxylate + H2O2 + NH4(+). The enzyme catalyses N-ethylglycine + O2 + H2O = ethylamine + glyoxylate + H2O2. It carries out the reaction sarcosine + O2 + H2O = methylamine + glyoxylate + H2O2. The catalysed reaction is D-alanine + O2 + H2O = pyruvate + H2O2 + NH4(+). It catalyses the reaction glyphosate + O2 + H2O = aminomethylphosphonate + glyoxylate + H2O2 + H(+). It participates in cofactor biosynthesis; thiamine diphosphate biosynthesis. Is competitively inhibited by glycolate. Functionally, catalyzes the FAD-dependent oxidative deamination of various amines and D-amino acids to yield the corresponding alpha-keto acids, ammonia/amine, and hydrogen peroxide. Oxidizes sarcosine (N-methylglycine), N-ethylglycine and glycine. Can also oxidize the herbicide glyphosate (N-phosphonomethylglycine). Displays lower activities on D-alanine, D-valine, D-proline and D-methionine. Does not act on L-amino acids and other D-amino acids. Is essential for thiamine biosynthesis since the oxidation of glycine catalyzed by ThiO generates the glycine imine intermediate (dehydroglycine) required for the biosynthesis of the thiazole ring of thiamine pyrophosphate. The protein is Glycine oxidase of Bacillus subtilis (strain 168).